The following is a 718-amino-acid chain: MAALEEEFTLSSVVLSAGPEGLLGVEQSDKTDQFLVTDSGRTVILYKVSDQKPLGSWSVKQGQIITCPAVCNFQTGEYVVVHDNKVLRIWNNEDVNLDKVFKATLSAEVYRILSVQGTEPLVLFKEGAVRGLEALLADPQQKIETVISDEEVIKWTKFFIVFRHRVLIFITEKHGNYFAYVQMFNSRILTKYTLLLGQDENSVVESFTASVDRKFISLMSLSSDGCIYETLIPIRPTDPEKNQSLVRSLLLKAVVSDNTQNGVALTALDQDHVAVLGSPLAASKECLSVWNIKFQTLQTSKELSQGTSGQVWYYGEHLFMLHGKSLTVIPYKCEVSSLAGALGKLKHSQDPGTHVVPHFVNWETPQGCGLGFQNSEQSRRILRRRKTEVSLQPEVPPSKQLLSTIMKDSEKHIEVEVRKFLALKQTPDFHTVVGDTVTGLLERCKAEPSFYPRNCLMQLIQTHVLSYSLCPDLMEIALKKKDVQLLQLCLQQFPDIPESVTCACLKIFLSIGDDSLQETDVSMESVFDYSNSVHDEKMEEQTEILQNGFNPEEDKCNNCDQELNKKPQDETKESTSCPVVQKRAALLNAILHSAFSETFLLPHLKDIPAQHITLFLKYLYFLYLKCSENATMTLPGIHPPTLNQIMDWICLLLDANFTVVVMMPEAKRLLINLYKLVKSQITVYSELNKIEVSFRELQKLNQEKNNRGLYSIEVLELF.

At lysine 346 the chain carries N6-methyllysine.

Interacts with UTP4. Interacts with FBL/fibrillarin in a transcription-dependent manner. May associate with the proposed t-UTP subcomplex of the SSU processome containing at least UTP4, WDR43, HEATR1, UTP15, WDR75.

The protein resides in the nucleus. The protein localises to the nucleolus. In terms of biological role, ribosome biogenesis factor. May be required for both optimal rDNA transcription and small subunit (SSU) pre-rRNA processing at sites A', A0, 1 and 2b. The polypeptide is Nucleolar protein 11 (NOL11) (Pongo abelii (Sumatran orangutan)).